A 152-amino-acid chain; its full sequence is ALK and LTK ligand 1 (152 aa).

Residues 1–23 (MRAEKRWHILLSMILLLITSSQC) form the signal peptide. Disulfide bonds link C113/C149 and C127/C136.

This sequence belongs to the ALKAL family. As to expression, expressed at low level in the notochord and iridophore stripes, the eye and the swim bladder.

Its subcellular location is the secreted. It is found in the cell membrane. Its function is as follows. Cytokine that acts as a physiological ligand for receptor tyrosine kinases LTK and ALK. Required for iridophore development in the adult eye by acting as a receptor for LTK. The chain is ALK and LTK ligand 1 from Danio rerio (Zebrafish).